A 150-amino-acid chain; its full sequence is MSFRFGQHLIKPSVVFLKTELSFALVNRKPVVPGHVLVCPLRPVERFRDLHPDEVADLFQVTQRVGTVVEKHFQGTSITFSMQDGPEAGQTVKHVHVHVLPRKAGDFPRNDNIYDELQKHDREEEDSPAFWRSEKEMAAEAEALRVYFQA.

Positions 2–109 (SFRFGQHLIK…LPRKAGDFPR (108 aa)) constitute an HIT domain. Residues H8, N27, Q83, and 89–92 (GQTV) each bind substrate. Positions 94 to 98 (HVHVH) match the Histidine triad motif motif. H96 acts as the Tele-AMP-histidine intermediate in catalysis. H98 serves as a coordination point for substrate. Y114 bears the Phosphotyrosine; by SRC mark. Phosphotyrosine is present on Y147.

As to quaternary structure, homodimer. Interacts with UBE2I. Interacts with MDM2. Interacts with CTNNB1. Identified in a complex with CTNNB1 and LEF1. Phosphorylation at Tyr-114 by SRC is required for induction of apoptosis. Expressed in heart, brain, lung and skeletal muscle. Particularly strong expression in liver, testis and kidney, where it is confined to the tubular epithelium.

It is found in the cytoplasm. The protein localises to the nucleus. It localises to the mitochondrion. It catalyses the reaction P(1),P(3)-bis(5'-adenosyl) triphosphate + H2O = AMP + ADP + 2 H(+). The enzyme catalyses adenosine 5'-phosphosulfate + H2O = sulfate + AMP + 2 H(+). The catalysed reaction is adenosine 5'-phosphosulfate + NH4(+) = adenosine 5'-phosphoramidate + sulfate + 2 H(+). It carries out the reaction adenosine 5'-phosphoramidate + H2O = AMP + NH4(+). Its function is as follows. Possesses dinucleoside triphosphate hydrolase activity. Cleaves P(1)-P(3)-bis(5'-adenosyl) triphosphate (Ap3A) to yield AMP and ADP. Can also hydrolyze P(1)-P(4)-bis(5'-adenosyl) tetraphosphate (Ap4A), but has extremely low activity with ATP. Exhibits adenylylsulfatase activity, hydrolyzing adenosine 5'-phosphosulfate to yield AMP and sulfate. Exhibits adenosine 5'-monophosphoramidase activity, hydrolyzing purine nucleotide phosphoramidates with a single phosphate group such as adenosine 5'monophosphoramidate (AMP-NH2) to yield AMP and NH2. Exhibits adenylylsulfate-ammonia adenylyltransferase, catalyzing the ammonolysis of adenosine 5'-phosphosulfate resulting in the formation of adenosine 5'-phosphoramidate. Also catalyzes the ammonolysis of adenosine 5-phosphorofluoridate and diadenosine triphosphate. Modulates transcriptional activation by CTNNB1 and thereby contributes to regulate the expression of genes essential for cell proliferation and survival, such as CCND1 and BIRC5. Plays a role in the induction of apoptosis via SRC and AKT1 signaling pathways. Inhibits MDM2-mediated proteasomal degradation of p53/TP53 and thereby plays a role in p53/TP53-mediated apoptosis. Induction of apoptosis depends on the ability of FHIT to bind P(1)-P(3)-bis(5'-adenosyl) triphosphate or related compounds, but does not require its catalytic activity. Functions as a tumor suppressor. The chain is Bis(5'-adenosyl)-triphosphatase (Fhit) from Mus musculus (Mouse).